Here is a 179-residue protein sequence, read N- to C-terminus: MTPRKTLRDYIRTIPDFPHEGIMFRDVTTLFADPRGFRIAVDQLLDPFVDVKIDKVAGLEARGFILGGAVAHQLSVGFVPIRKKGKLPGKTIAQDYVLEYGKATVEIHDDAFQPGERVLLVDDLLATGGTARAGIQLIERLGAEVVGCAFLIDLPDLGGRKLLEEMDMGVHALTSFDGD.

It belongs to the purine/pyrimidine phosphoribosyltransferase family. As to quaternary structure, homodimer.

The protein localises to the cytoplasm. The enzyme catalyses AMP + diphosphate = 5-phospho-alpha-D-ribose 1-diphosphate + adenine. Its pathway is purine metabolism; AMP biosynthesis via salvage pathway; AMP from adenine: step 1/1. Catalyzes a salvage reaction resulting in the formation of AMP, that is energically less costly than de novo synthesis. The protein is Adenine phosphoribosyltransferase of Dinoroseobacter shibae (strain DSM 16493 / NCIMB 14021 / DFL 12).